Reading from the N-terminus, the 237-residue chain is Putative glutathione-dependent formaldehyde-activating enzyme (237 aa).

Residues 38 to 152 form the CENP-V/GFA domain; it reads ITLICHCPPS…LGQSGGSEGE (115 aa). Residues Cys42, Cys44, Cys67, Cys69, Cys72, Cys114, and Cys117 each contribute to the Zn(2+) site.

It belongs to the Gfa family. Zn(2+) serves as cofactor.

It carries out the reaction S-(hydroxymethyl)glutathione = glutathione + formaldehyde. Its pathway is one-carbon metabolism; formaldehyde degradation; formate from formaldehyde (glutathione route): step 1/3. In terms of biological role, catalyzes the condensation of formaldehyde and glutathione to S-hydroxymethylglutathione. This Sordaria macrospora (strain ATCC MYA-333 / DSM 997 / K(L3346) / K-hell) protein is Putative glutathione-dependent formaldehyde-activating enzyme.